Here is a 428-residue protein sequence, read N- to C-terminus: Glutamine synthetase, chloroplastic (428 aa).

A chloroplast-targeting transit peptide spans 1–49 (MAQILAASPTCQMRLTKPSSIASSKLWNSVVLKQKKQSSSKVRSFKVMA). A GS beta-grasp domain is found at 75–155 (IIAEYIWIGG…VICDTYTPAG (81 aa)). The tract at residues 94-120 (RTLEKPVEDPSELPKWNYDGSSTGQAP) is disordered. The residue at position 104 (Ser-104) is a Phosphoserine. The GS catalytic domain occupies 159-428 (PTNKRARAAE…LAAQKLSLKV (270 aa)).

It belongs to the glutamine synthetase family. Homooctamer.

Its subcellular location is the plastid. It localises to the chloroplast. The catalysed reaction is L-glutamate + NH4(+) + ATP = L-glutamine + ADP + phosphate + H(+). Its function is as follows. The light-modulated chloroplast enzyme, encoded by a nuclear gene and expressed primarily in leaves, is responsible for the reassimilation of the ammonia generated by photorespiration. The protein is Glutamine synthetase, chloroplastic (GLN2) of Brassica napus (Rape).